The primary structure comprises 300 residues: Protoheme IX farnesyltransferase (300 aa).

9 helical membrane-spanning segments follow: residues 24–44, 48–68, 94–114, 118–138, 146–166, 172–192, 217–237, 239–259, and 278–298; these read VTQLAVFCAVIGMFLATPGMV, VLIGGTVGIWLLAGAAFAINC, PQILLFSAVLGSIGAWTLYTF, LTMWLTIATFVGYAVIYTLLL, IVIGGASGAMPPALGWAAVTG, AWILVLIIFVWTPPHFWVLAL, LHILLYTVILFAVTLMPFISG, SGAVYLTSAVLLGAVFLAYAW, and IVYLSLLFAALLVDHYARPLL.

It belongs to the UbiA prenyltransferase family. Protoheme IX farnesyltransferase subfamily.

Its subcellular location is the cell inner membrane. It carries out the reaction heme b + (2E,6E)-farnesyl diphosphate + H2O = Fe(II)-heme o + diphosphate. Its pathway is porphyrin-containing compound metabolism; heme O biosynthesis; heme O from protoheme: step 1/1. In terms of biological role, converts heme B (protoheme IX) to heme O by substitution of the vinyl group on carbon 2 of heme B porphyrin ring with a hydroxyethyl farnesyl side group. This chain is Protoheme IX farnesyltransferase, found in Burkholderia vietnamiensis (strain G4 / LMG 22486) (Burkholderia cepacia (strain R1808)).